Consider the following 135-residue polypeptide: CTP pyrophosphohydrolase (135 aa).

Residues 2–127 form the Nudix hydrolase domain; it reads KMIEVVAAII…DIPLLEAFMA (126 aa). Substrate is bound by residues 34 to 39, arginine 72, and aspartate 118; that span reads FAGGKV. A Nudix box motif is present at residues 37 to 58; it reads GKVEPDESQRQALVRELREELG.

This sequence belongs to the Nudix hydrolase family. Monomer. Mg(2+) serves as cofactor. It depends on Mn(2+) as a cofactor.

It catalyses the reaction CTP + H2O = CMP + diphosphate + H(+). The enzyme catalyses dCTP + H2O = dCMP + diphosphate + H(+). Functionally, hydrolase with a preference for pyrimidine substrates. Has high activity with 5-methyl-dCTP, and much lower activity with CTP, dCTP, 5-hydroxy-dCTP, 2-hydroxy-dATP and 8-hydroxy-dGTP. This chain is CTP pyrophosphohydrolase (nudG), found in Escherichia coli (strain K12).